The chain runs to 559 residues: Sesquiterpene synthase TPS3 (559 aa).

Arginine 275, aspartate 312, aspartate 316, arginine 453, and aspartate 456 together coordinate (2E,6E)-farnesyl diphosphate. Mg(2+) is bound by residues aspartate 312 and aspartate 316. The DDXXD motif motif lies at 312-316 (DDTYD). Aspartate 456, threonine 460, and glutamate 464 together coordinate Mg(2+).

This sequence belongs to the terpene synthase family. Tpsa subfamily. As to quaternary structure, monomer. Requires Mg(2+) as cofactor. In terms of tissue distribution, highly expressed in glandular trichomes. Expressed in roots and leaves.

The protein resides in the cytoplasm. It carries out the reaction (2E,6E)-farnesyl diphosphate = (+)-(R)-germacrene A + diphosphate. Its pathway is secondary metabolite biosynthesis; terpenoid biosynthesis. Functionally, sesquiterpene synthase involved in the biosynthesis of volatile compounds. Mediates the conversion of (2E,6E)-farnesyl diphosphate (FPP) into (+)-(R)-germacrene A. The sequence is that of Sesquiterpene synthase TPS3 from Xanthium strumarium (Rough cocklebur).